The following is a 107-amino-acid chain: Thioredoxin (107 aa).

Residues 2–107 (SVEAVVKQVD…GIRELIQANA (106 aa)) enclose the Thioredoxin domain. Catalysis depends on nucleophile residues C34 and C37. C34 and C37 are oxidised to a cystine.

Belongs to the thioredoxin family.

Its function is as follows. Participates in various redox reactions through the reversible oxidation of its active center dithiol to a disulfide and catalyzes dithiol-disulfide exchange reactions. The sequence is that of Thioredoxin (TRX) from Echinococcus granulosus (Hydatid tapeworm).